The chain runs to 216 residues: Phosphoribosylformylglycinamidine synthase subunit PurQ (216 aa).

The Glutamine amidotransferase type-1 domain maps to 2-216 (SIGVIVFPGS…GRRMLEALLG (215 aa)). Cys-86 functions as the Nucleophile in the catalytic mechanism. Active-site residues include His-193 and Glu-195.

In terms of assembly, part of the FGAM synthase complex composed of 1 PurL, 1 PurQ and 2 PurS subunits.

It is found in the cytoplasm. The enzyme catalyses N(2)-formyl-N(1)-(5-phospho-beta-D-ribosyl)glycinamide + L-glutamine + ATP + H2O = 2-formamido-N(1)-(5-O-phospho-beta-D-ribosyl)acetamidine + L-glutamate + ADP + phosphate + H(+). The catalysed reaction is L-glutamine + H2O = L-glutamate + NH4(+). It participates in purine metabolism; IMP biosynthesis via de novo pathway; 5-amino-1-(5-phospho-D-ribosyl)imidazole from N(2)-formyl-N(1)-(5-phospho-D-ribosyl)glycinamide: step 1/2. Functionally, part of the phosphoribosylformylglycinamidine synthase complex involved in the purines biosynthetic pathway. Catalyzes the ATP-dependent conversion of formylglycinamide ribonucleotide (FGAR) and glutamine to yield formylglycinamidine ribonucleotide (FGAM) and glutamate. The FGAM synthase complex is composed of three subunits. PurQ produces an ammonia molecule by converting glutamine to glutamate. PurL transfers the ammonia molecule to FGAR to form FGAM in an ATP-dependent manner. PurS interacts with PurQ and PurL and is thought to assist in the transfer of the ammonia molecule from PurQ to PurL. The chain is Phosphoribosylformylglycinamidine synthase subunit PurQ from Synechococcus sp. (strain CC9605).